Here is a 95-residue protein sequence, read N- to C-terminus: Aspartyl/glutamyl-tRNA(Asn/Gln) amidotransferase subunit C (95 aa).

It belongs to the GatC family. As to quaternary structure, heterotrimer of A, B and C subunits.

The catalysed reaction is L-glutamyl-tRNA(Gln) + L-glutamine + ATP + H2O = L-glutaminyl-tRNA(Gln) + L-glutamate + ADP + phosphate + H(+). It catalyses the reaction L-aspartyl-tRNA(Asn) + L-glutamine + ATP + H2O = L-asparaginyl-tRNA(Asn) + L-glutamate + ADP + phosphate + 2 H(+). Its function is as follows. Allows the formation of correctly charged Asn-tRNA(Asn) or Gln-tRNA(Gln) through the transamidation of misacylated Asp-tRNA(Asn) or Glu-tRNA(Gln) in organisms which lack either or both of asparaginyl-tRNA or glutaminyl-tRNA synthetases. The reaction takes place in the presence of glutamine and ATP through an activated phospho-Asp-tRNA(Asn) or phospho-Glu-tRNA(Gln). The polypeptide is Aspartyl/glutamyl-tRNA(Asn/Gln) amidotransferase subunit C (Rhizobium johnstonii (strain DSM 114642 / LMG 32736 / 3841) (Rhizobium leguminosarum bv. viciae)).